The primary structure comprises 380 residues: Alcohol dehydrogenase (380 aa).

Zn(2+)-binding residues include Cys48, Thr50, His70, Cys100, Cys103, Cys106, Cys114, and Cys178. An alcohol is bound by residues Thr50 and His70. Thr50 provides a ligand contact to NAD(+). Residues 203–208, Asp227, Arg232, Thr273, Val296, 296–298, Phe323, and Arg373 contribute to the NAD(+) site; these read GLGAVG and VGV.

Belongs to the zinc-containing alcohol dehydrogenase family. In terms of assembly, homodimer. The cofactor is Zn(2+).

The protein localises to the cytoplasm. The catalysed reaction is a primary alcohol + NAD(+) = an aldehyde + NADH + H(+). It catalyses the reaction a secondary alcohol + NAD(+) = a ketone + NADH + H(+). This is Alcohol dehydrogenase (ADH) from Malus domestica (Apple).